The following is a 173-amino-acid chain: Zinc finger matrin-type protein 5 (173 aa).

The segment at 51 to 79 (ERSKEVCRKFVQTGQCVFGTSCRFSHMSE) adopts a C3H1-type zinc-finger fold. The disordered stretch occupies residues 83-111 (KMLEQKIDDEKRQKEDPDQDGSSERSVDE).

As to quaternary structure, component of the U11/U12 snRNPs that are part of the U12-type spliceosome.

It localises to the nucleus. The chain is Zinc finger matrin-type protein 5 (zmat5) from Danio rerio (Zebrafish).